A 200-amino-acid polypeptide reads, in one-letter code: NADH-quinone oxidoreductase subunit C (200 aa).

It belongs to the complex I 30 kDa subunit family. As to quaternary structure, NDH-1 is composed of 14 different subunits. Subunits NuoB, C, D, E, F, and G constitute the peripheral sector of the complex.

The protein localises to the cell inner membrane. The enzyme catalyses a quinone + NADH + 5 H(+)(in) = a quinol + NAD(+) + 4 H(+)(out). In terms of biological role, NDH-1 shuttles electrons from NADH, via FMN and iron-sulfur (Fe-S) centers, to quinones in the respiratory chain. The immediate electron acceptor for the enzyme in this species is believed to be ubiquinone. Couples the redox reaction to proton translocation (for every two electrons transferred, four hydrogen ions are translocated across the cytoplasmic membrane), and thus conserves the redox energy in a proton gradient. The polypeptide is NADH-quinone oxidoreductase subunit C (Parvibaculum lavamentivorans (strain DS-1 / DSM 13023 / NCIMB 13966)).